The sequence spans 251 residues: Ditrans,polycis-undecaprenyl-diphosphate synthase ((2E,6E)-farnesyl-diphosphate specific) (251 aa).

Asp19 is a catalytic residue. Residue Asp19 participates in Mg(2+) binding. Residues 20-23, Trp24, His36, and 64-66 contribute to the substrate site; these read GNNR and SSE. Asn67 functions as the Proton acceptor in the catalytic mechanism. Substrate is bound by residues Trp68, Arg70, Arg187, and 193-195; that span reads RIS. Glu206 serves as a coordination point for Mg(2+).

This sequence belongs to the UPP synthase family. As to quaternary structure, homodimer. It depends on Mg(2+) as a cofactor.

The enzyme catalyses 8 isopentenyl diphosphate + (2E,6E)-farnesyl diphosphate = di-trans,octa-cis-undecaprenyl diphosphate + 8 diphosphate. Functionally, catalyzes the sequential condensation of isopentenyl diphosphate (IPP) with (2E,6E)-farnesyl diphosphate (E,E-FPP) to yield (2Z,6Z,10Z,14Z,18Z,22Z,26Z,30Z,34E,38E)-undecaprenyl diphosphate (di-trans,octa-cis-UPP). UPP is the precursor of glycosyl carrier lipid in the biosynthesis of bacterial cell wall polysaccharide components such as peptidoglycan and lipopolysaccharide. The sequence is that of Ditrans,polycis-undecaprenyl-diphosphate synthase ((2E,6E)-farnesyl-diphosphate specific) from Pseudomonas aeruginosa (strain ATCC 15692 / DSM 22644 / CIP 104116 / JCM 14847 / LMG 12228 / 1C / PRS 101 / PAO1).